The chain runs to 582 residues: Proline--tRNA ligase (582 aa).

Belongs to the class-II aminoacyl-tRNA synthetase family. ProS type 1 subfamily. Homodimer.

It is found in the cytoplasm. The catalysed reaction is tRNA(Pro) + L-proline + ATP = L-prolyl-tRNA(Pro) + AMP + diphosphate. In terms of biological role, catalyzes the attachment of proline to tRNA(Pro) in a two-step reaction: proline is first activated by ATP to form Pro-AMP and then transferred to the acceptor end of tRNA(Pro). As ProRS can inadvertently accommodate and process non-cognate amino acids such as alanine and cysteine, to avoid such errors it has two additional distinct editing activities against alanine. One activity is designated as 'pretransfer' editing and involves the tRNA(Pro)-independent hydrolysis of activated Ala-AMP. The other activity is designated 'posttransfer' editing and involves deacylation of mischarged Ala-tRNA(Pro). The misacylated Cys-tRNA(Pro) is not edited by ProRS. This Mycolicibacterium paratuberculosis (strain ATCC BAA-968 / K-10) (Mycobacterium paratuberculosis) protein is Proline--tRNA ligase.